The sequence spans 195 residues: Holliday junction branch migration complex subunit RuvA (195 aa).

A domain I region spans residues 1–64; the sequence is MIKGVEGEIT…DRAPEIYGFK (64 aa). Positions 65–137 are domain II; that stretch reads DRAEYNVFLM…LYDLVKDYAV (73 aa). The interval 137-141 is flexible linker; it reads VEFPK. The domain III stretch occupies residues 142–195; that stretch reads ELSDVSEDAVGALTALGFDMTSAKLAVNEVLKEQTVENTQELVRKALRKLNKTR.

The protein belongs to the RuvA family. Homotetramer. Forms an RuvA(8)-RuvB(12)-Holliday junction (HJ) complex. HJ DNA is sandwiched between 2 RuvA tetramers; dsDNA enters through RuvA and exits via RuvB. An RuvB hexamer assembles on each DNA strand where it exits the tetramer. Each RuvB hexamer is contacted by two RuvA subunits (via domain III) on 2 adjacent RuvB subunits; this complex drives branch migration. In the full resolvosome a probable DNA-RuvA(4)-RuvB(12)-RuvC(2) complex forms which resolves the HJ.

It localises to the cytoplasm. Functionally, the RuvA-RuvB-RuvC complex processes Holliday junction (HJ) DNA during genetic recombination and DNA repair, while the RuvA-RuvB complex plays an important role in the rescue of blocked DNA replication forks via replication fork reversal (RFR). RuvA specifically binds to HJ cruciform DNA, conferring on it an open structure. The RuvB hexamer acts as an ATP-dependent pump, pulling dsDNA into and through the RuvAB complex. HJ branch migration allows RuvC to scan DNA until it finds its consensus sequence, where it cleaves and resolves the cruciform DNA. The protein is Holliday junction branch migration complex subunit RuvA of Kosmotoga olearia (strain ATCC BAA-1733 / DSM 21960 / TBF 19.5.1).